We begin with the raw amino-acid sequence, 289 residues long: 4-hydroxybenzoate octaprenyltransferase (289 aa).

8 consecutive transmembrane segments (helical) span residues 21-40 (PIGT…LAAG), 95-115 (VLAL…TMNS), 116-136 (LTIA…FMKR), 138-158 (IPIP…MAYA), 161-181 (ANAL…WTIA), 213-233 (IIGV…QLMG), 236-256 (AWYY…QRLI), and 268-288 (FLNN…NYLL).

It belongs to the UbiA prenyltransferase family. The cofactor is Mg(2+).

The protein localises to the cell inner membrane. It catalyses the reaction all-trans-octaprenyl diphosphate + 4-hydroxybenzoate = 4-hydroxy-3-(all-trans-octaprenyl)benzoate + diphosphate. Its pathway is cofactor biosynthesis; ubiquinone biosynthesis. Functionally, catalyzes the prenylation of para-hydroxybenzoate (PHB) with an all-trans polyprenyl group. Mediates the second step in the final reaction sequence of ubiquinone-8 (UQ-8) biosynthesis, which is the condensation of the polyisoprenoid side chain with PHB, generating the first membrane-bound Q intermediate 3-octaprenyl-4-hydroxybenzoate. In Aeromonas salmonicida (strain A449), this protein is 4-hydroxybenzoate octaprenyltransferase.